Reading from the N-terminus, the 413-residue chain is Gamma-glutamyl phosphate reductase (413 aa).

This sequence belongs to the gamma-glutamyl phosphate reductase family.

It localises to the cytoplasm. The enzyme catalyses L-glutamate 5-semialdehyde + phosphate + NADP(+) = L-glutamyl 5-phosphate + NADPH + H(+). It functions in the pathway amino-acid biosynthesis; L-proline biosynthesis; L-glutamate 5-semialdehyde from L-glutamate: step 2/2. In terms of biological role, catalyzes the NADPH-dependent reduction of L-glutamate 5-phosphate into L-glutamate 5-semialdehyde and phosphate. The product spontaneously undergoes cyclization to form 1-pyrroline-5-carboxylate. The protein is Gamma-glutamyl phosphate reductase of Lactococcus lactis subsp. cremoris (strain SK11).